We begin with the raw amino-acid sequence, 282 residues long: Deoxyribonuclease-1 (282 aa).

Positions 1–22 (MRGARLTGALLALAGLLQVALS) are cleaved as a signal peptide. N-linked (GlcNAc...) asparagine glycosylation occurs at N40. E100 is a catalytic residue. A disulfide bridge links C123 with C126. An N-linked (GlcNAc...) asparagine glycan is attached at N128. The active site involves H156. A disulfide bridge connects residues C195 and C231.

This sequence belongs to the DNase I family. The cofactor is Ca(2+). Mg(2+) serves as cofactor.

The protein resides in the secreted. Its subcellular location is the zymogen granule. It is found in the nucleus envelope. It carries out the reaction Endonucleolytic cleavage to 5'-phosphodinucleotide and 5'-phosphooligonucleotide end-products.. In terms of biological role, serum endocuclease secreted into body fluids by a wide variety of exocrine and endocrine organs. Expressed by non-hematopoietic tissues and preferentially cleaves protein-free DNA. Among other functions, seems to be involved in cell death by apoptosis. Binds specifically to G-actin and blocks actin polymerization. Together with DNASE1L3, plays a key role in degrading neutrophil extracellular traps (NETs). NETs are mainly composed of DNA fibers and are released by neutrophils to bind pathogens during inflammation. Degradation of intravascular NETs by DNASE1 and DNASE1L3 is required to prevent formation of clots that obstruct blood vessels and cause organ damage following inflammation. The protein is Deoxyribonuclease-1 (DNASE1) of Equus caballus (Horse).